A 126-amino-acid chain; its full sequence is Calcitonin receptor-stimulating peptide 1 (126 aa).

A signal peptide spans 1-25; sequence MGFWKFPPFLVLSILVLYQAGMFHT. Positions 26–78 are excised as a propeptide; that stretch reads APMRSAFGSPFDPATLSEEESRLLLAAMVNDYEQMKAREMQKQRAQGSGISVQ. Residues C82 and C87 are joined by a disulfide bond. G118 bears the Glycine amide mark. Positions 123 to 126 are excised as a propeptide; it reads NFWI.

Mainly expressed in the thyroid gland and CNS. Found in the nerve cells of cerebrum, hippocampus, hypothalamus, pons/midbrain and thalamus.

It is found in the secreted. Functionally, stimulates cAMP production in porcine kidney cell line LLC-PK1 via the calcitonin receptor (CT) but not via the CT-like (CL) receptor. This is Calcitonin receptor-stimulating peptide 1 (CRSP1) from Sus scrofa (Pig).